The primary structure comprises 369 residues: Probable trehalose-phosphate phosphatase I (369 aa).

The protein belongs to the trehalose phosphatase family. The cofactor is a divalent metal cation.

The enzyme catalyses alpha,alpha-trehalose 6-phosphate + H2O = alpha,alpha-trehalose + phosphate. Its pathway is glycan biosynthesis; trehalose biosynthesis. Removes the phosphate from trehalose 6-phosphate to produce free trehalose. Trehalose accumulation in plant may improve abiotic stress tolerance. The protein is Probable trehalose-phosphate phosphatase I (TPPI) of Arabidopsis thaliana (Mouse-ear cress).